Reading from the N-terminus, the 423-residue chain is Serine--tRNA ligase (423 aa).

A disordered region spans residues 107–130 (PHDSVPDGKSENDNREIRQWGAPP). Residues 110–124 (SVPDGKSENDNREIR) are compositionally biased toward basic and acidic residues. 231–233 (TGE) provides a ligand contact to L-serine. Residue 262–264 (RSE) coordinates ATP. L-serine is bound at residue Glu285. Residue 349–352 (EISS) participates in ATP binding. Ser385 is an L-serine binding site.

This sequence belongs to the class-II aminoacyl-tRNA synthetase family. Type-1 seryl-tRNA synthetase subfamily. Homodimer. The tRNA molecule binds across the dimer.

The protein localises to the cytoplasm. It catalyses the reaction tRNA(Ser) + L-serine + ATP = L-seryl-tRNA(Ser) + AMP + diphosphate + H(+). The enzyme catalyses tRNA(Sec) + L-serine + ATP = L-seryl-tRNA(Sec) + AMP + diphosphate + H(+). Its pathway is aminoacyl-tRNA biosynthesis; selenocysteinyl-tRNA(Sec) biosynthesis; L-seryl-tRNA(Sec) from L-serine and tRNA(Sec): step 1/1. Its function is as follows. Catalyzes the attachment of serine to tRNA(Ser). Is also able to aminoacylate tRNA(Sec) with serine, to form the misacylated tRNA L-seryl-tRNA(Sec), which will be further converted into selenocysteinyl-tRNA(Sec). The polypeptide is Serine--tRNA ligase (Coxiella burnetii (strain Dugway 5J108-111)).